We begin with the raw amino-acid sequence, 353 residues long: DNA polymerase IV (353 aa).

Residues 14-198 enclose the UmuC domain; it reads IIHIDMDAFF…MDISKFHGVG (185 aa). The Mg(2+) site is built by Asp-18 and Asp-116. Glu-117 is an active-site residue.

This sequence belongs to the DNA polymerase type-Y family. Monomer. Mg(2+) is required as a cofactor.

It localises to the cytoplasm. It carries out the reaction DNA(n) + a 2'-deoxyribonucleoside 5'-triphosphate = DNA(n+1) + diphosphate. Poorly processive, error-prone DNA polymerase involved in untargeted mutagenesis. Copies undamaged DNA at stalled replication forks, which arise in vivo from mismatched or misaligned primer ends. These misaligned primers can be extended by PolIV. Exhibits no 3'-5' exonuclease (proofreading) activity. May be involved in translesional synthesis, in conjunction with the beta clamp from PolIII. This is DNA polymerase IV from Streptococcus pneumoniae serotype 2 (strain D39 / NCTC 7466).